Consider the following 115-residue polypeptide: MNSGVCLCVLMAVLAAGALTQPVPPADPAGSGLQRAEEAPRRQLRVSQRTDGESRAHLGALLARYIQQARKAPSGRMSIVKNLQNLDPSHRISDRDYMGWMDFGRRSAEEYEYPS.

An N-terminal signal peptide occupies residues 1 to 20; that stretch reads MNSGVCLCVLMAVLAAGALT. Residues 21 to 44 constitute a propeptide that is removed on maturation; it reads QPVPPADPAGSGLQRAEEAPRRQL. Residues 23 to 52 form a disordered region; it reads VPPADPAGSGLQRAEEAPRRQLRVSQRTDG. O-linked (Xyl...) (chondroitin sulfate) serine glycosylation occurs at S31. Y97 carries the sulfotyrosine modification. At F103 the chain carries Phenylalanine amide. Residues 107–115 constitute a propeptide that is removed on maturation; it reads SAEEYEYPS. Sulfotyrosine occurs at positions 111 and 113.

This sequence belongs to the gastrin/cholecystokinin family. Binds to CCK-A receptors in the pancreas and CCK-B receptors in the brain. In terms of processing, the precursor is cleaved by proteases to produce a number of active cholecystokinins. Post-translationally, the precursor is cleaved by ACE, which removes the Gly-Arg-Arg peptide at the C-terminus, leading to mature hormone. As to expression, detected in cerebrospinal fluid and urine (at protein level).

Its subcellular location is the secreted. In terms of biological role, this peptide hormone induces gall bladder contraction and the release of pancreatic enzymes in the gut. Its function in the brain is not clear. Binding to CCK-A receptors stimulates amylase release from the pancreas, binding to CCK-B receptors stimulates gastric acid secretion. The protein is Cholecystokinin (CCK) of Homo sapiens (Human).